We begin with the raw amino-acid sequence, 332 residues long: GLIPR1-like protein 2 (332 aa).

In terms of domain architecture, SCP spans 57–191; sequence LHNELRGTVF…THAALFICNY (135 aa). An N-linked (GlcNAc...) asparagine glycan is attached at asparagine 145. A helical transmembrane segment spans residues 253 to 273; sequence IFILFLRVASLLLCVIVVLIV. The tract at residues 293–332 is disordered; it reads EGKTEVEIVMEEGEGEGEGGEGEGEGEEKEEEEMLEEDEQ. A compositionally biased stretch (acidic residues) spans 300–332; it reads IVMEEGEGEGEGGEGEGEGEEKEEEEMLEEDEQ.

This sequence belongs to the CRISP family.

It is found in the membrane. This chain is GLIPR1-like protein 2 (Glipr1l2), found in Mus musculus (Mouse).